We begin with the raw amino-acid sequence, 190 residues long: Zinc finger C2H2 protein ECU03_0790 (190 aa).

C2H2-type zinc fingers lie at residues 4-27, 33-55, 85-108, and 119-142; these read RCCF…LNTH, YKCD…KKKH, YKCG…ESHH, and HVCE…RSVH.

The protein is Zinc finger C2H2 protein ECU03_0790 of Encephalitozoon cuniculi (strain GB-M1) (Microsporidian parasite).